Here is a 116-residue protein sequence, read N- to C-terminus: Cocaine- and amphetamine-regulated transcript protein (116 aa).

Residues 1 to 27 (MESPRLRLLPLLGAALLLLLPLLGALA) form the signal peptide. Phosphotyrosine is present on Tyr-41. Residue Ser-48 is modified to Phosphoserine. 3 disulfide bridges follow: Cys-82–Cys-100, Cys-88–Cys-108, and Cys-102–Cys-115.

The protein belongs to the CART family.

It is found in the secreted. Satiety factor closely associated with the actions of leptin and neuropeptide y; this anorectic peptide inhibits both normal and starvation-induced feeding and completely blocks the feeding response induced by neuropeptide Y and regulated by leptin in the hypothalamus. This chain is Cocaine- and amphetamine-regulated transcript protein (CARTPT), found in Bos taurus (Bovine).